A 161-amino-acid polypeptide reads, in one-letter code: Phosphopantetheine adenylyltransferase (161 aa).

A substrate-binding site is contributed by Ser8. Residues 8–9 and His16 each bind ATP; that span reads SF. Residues Lys40, Thr72, and Arg86 each contribute to the substrate site. ATP is bound by residues 87 to 89, Glu97, and 122 to 128; these read GLR and HSFLSSS.

This sequence belongs to the bacterial CoaD family. As to quaternary structure, homohexamer. Mg(2+) is required as a cofactor.

It is found in the cytoplasm. The enzyme catalyses (R)-4'-phosphopantetheine + ATP + H(+) = 3'-dephospho-CoA + diphosphate. It participates in cofactor biosynthesis; coenzyme A biosynthesis; CoA from (R)-pantothenate: step 4/5. Functionally, reversibly transfers an adenylyl group from ATP to 4'-phosphopantetheine, yielding dephospho-CoA (dPCoA) and pyrophosphate. The sequence is that of Phosphopantetheine adenylyltransferase from Prochlorococcus marinus (strain SARG / CCMP1375 / SS120).